A 317-amino-acid chain; its full sequence is Neuroguidin-A (317 aa).

2 disordered regions span residues 125-170 (ENDP…SKVK) and 280-317 (SALT…RRRH). A compositionally biased stretch (acidic residues) spans 146–157 (DERESDSGEEGA). The span at 297 to 317 (KKSKKGPKKSKKKKGFSRRRH) shows a compositional bias: basic residues.

Belongs to the SAS10 family. Part of the small subunit (SSU) processome, composed of more than 70 proteins and the RNA chaperone small nucleolar RNA (snoRNA) U3.

The protein localises to the nucleus. Its subcellular location is the nucleolus. The protein resides in the chromosome. It localises to the centromere. It is found in the cytoplasm. The protein localises to the cell projection. Its subcellular location is the axon. The protein resides in the dendrite. It localises to the filopodium. Functionally, part of the small subunit (SSU) processome, first precursor of the small eukaryotic ribosomal subunit. During the assembly of the SSU processome in the nucleolus, many ribosome biogenesis factors, an RNA chaperone and ribosomal proteins associate with the nascent pre-rRNA and work in concert to generate RNA folding, modifications, rearrangements and cleavage as well as targeted degradation of pre-ribosomal RNA by the RNA exosome. Its dissociation from the complex determines the transition from state pre-A1 to state pre-A1*. May inhibit mRNA translation. This Xenopus laevis (African clawed frog) protein is Neuroguidin-A (ngdn-a).